Here is a 23-residue protein sequence, read N- to C-terminus: Septenin 2c (23 aa).

In terms of tissue distribution, expressed in skin granular glands.

The protein resides in the secreted. May act as an antimicrobial peptide. In Osteopilus septentrionalis (Cuban treefrog), this protein is Septenin 2c.